The following is a 390-amino-acid chain: Phosphoglycerate kinase (390 aa).

Substrate is bound by residues 21–23 (DLN), Arg-36, 59–62 (HLGR), Arg-112, and Arg-145. ATP contacts are provided by residues Lys-196, Glu-317, and 343 to 346 (GGDT).

The protein belongs to the phosphoglycerate kinase family. In terms of assembly, monomer.

It localises to the cytoplasm. It carries out the reaction (2R)-3-phosphoglycerate + ATP = (2R)-3-phospho-glyceroyl phosphate + ADP. It participates in carbohydrate degradation; glycolysis; pyruvate from D-glyceraldehyde 3-phosphate: step 2/5. This is Phosphoglycerate kinase from Cellvibrio japonicus (strain Ueda107) (Pseudomonas fluorescens subsp. cellulosa).